Reading from the N-terminus, the 257-residue chain is uncharacterized protein (257 aa).

The N-terminal stretch at 1-22 is a signal peptide; that stretch reads MRYLKRLSWYISILILIVVIAG. C23 carries the N-palmitoyl cysteine lipid modification. C23 carries S-diacylglycerol cysteine lipidation.

It belongs to the staphylococcal tandem lipoprotein family.

The protein resides in the cell membrane. This is an uncharacterized protein from Staphylococcus aureus (strain N315).